A 361-amino-acid chain; its full sequence is 45 kDa calcium-binding protein (361 aa).

Positions 1–35 (MVWLVAMTSRQRSLCGLAAHGLWFLGLVLLMDATA) are cleaved as a signal peptide. An N-linked (GlcNAc...) asparagine glycan is attached at Asn39. EF-hand domains are found at residues 97–132 (RSRR…KTAE) and 136–171 (EAVK…SKGH). Ser98 is modified (phosphoserine). Residues Asp110, Asn112, Asp114, Arg116, Glu121, Asp149, Asp151, Asp153, His155, and Glu160 each coordinate Ca(2+). Thr192 carries the phosphothreonine modification. 4 consecutive EF-hand domains span residues 196–231 (LGNL…HSRG), 232–267 (MLKF…TVEN), 277–312 (WVKD…MNEY), and 313–348 (NALN…FTGS). Residue Asp212 participates in Ca(2+) binding. A Phosphothreonine modification is found at Thr216. Residues Glu219, Asp245, Asp247, Asp249, Gln251, and Glu256 each coordinate Ca(2+). Position 264 is a phosphothreonine (Thr264). Residues Asp290, Asn292, and Asp294 each contribute to the Ca(2+) site. Thr298 bears the Phosphothreonine mark. Ca(2+)-binding residues include Glu301, Asp326, Asn328, Asn330, His332, and Glu337. The segment at 308–361 (PMNEYNALNEAKQMIAIADENQNHHLEPEEILKYSEFFTGSKLMDYARNVHEEF) is necessary for intracellular retention in Golgi apparatus lumen.

Belongs to the CREC family. In terms of assembly, a membrane-associated isoform interacts with STX3 and STXBP1. A membrane-associated isoform is expressed in acini of the pancreas (at protein level). Ubiquitous.

It is found in the golgi apparatus lumen. Functionally, a membrane-associated isoform may be involved in the exocytosis of zymogens by pancreatic acini. May regulate calcium-dependent activities in the endoplasmic reticulum lumen or post-ER compartment. This is 45 kDa calcium-binding protein (Sdf4) from Rattus norvegicus (Rat).